The primary structure comprises 504 residues: Maturase K (504 aa).

The protein belongs to the intron maturase 2 family. MatK subfamily.

It localises to the plastid. Its subcellular location is the chloroplast. Functionally, usually encoded in the trnK tRNA gene intron. Probably assists in splicing its own and other chloroplast group II introns. In Lobularia maritima (Sweet alyssum), this protein is Maturase K.